Here is a 148-residue protein sequence, read N- to C-terminus: UPAR/Ly6 domain-containing protein bero (148 aa).

Residues 1-23 (MVSALKCSLAVAVMISLACSAYA) form the signal peptide. 5 disulfides stabilise this stretch: C26-C72, C29-C37, C51-C90, C102-C116, and C119-C124. N-linked (GlcNAc...) asparagine glycosylation is present at N68. N125 carries an N-linked (GlcNAc...) asparagine glycan. A lipid anchor (GPI-anchor amidated asparagine) is attached at N125. Positions 126–148 (GSSSLAPIAGAILLFFGVARLLA) are cleaved as a propeptide — removed in mature form. A helical transmembrane segment spans residues 128 to 148 (SSLAPIAGAILLFFGVARLLA).

This sequence belongs to the quiver family.

Its subcellular location is the cell membrane. The protein localises to the membrane. It localises to the perikaryon. It is found in the cell projection. The protein resides in the neuron projection. In terms of biological role, necessary for the maintenance of persistent fluctuating activities and suppression of acute evoked activities in abdominal leucokinin-producing (ABLK) neurons to negatively regulate neuron excitability involved in nociceptive (perception of pain) behavioral responses. The chain is UPAR/Ly6 domain-containing protein bero from Drosophila melanogaster (Fruit fly).